Consider the following 333-residue polypeptide: Thiamine-monophosphate kinase (333 aa).

Asp44, Ser58, Thr59, and Asp60 together coordinate Mg(2+). His67 provides a ligand contact to substrate. Mg(2+) is bound by residues Asp89 and Asp137. ATP contacts are provided by residues 136–137 and Arg162; that span reads GD. Asp224 contributes to the Mg(2+) binding site. Ser226 provides a ligand contact to ATP. Asp227 lines the Mg(2+) pocket. Substrate-binding residues include Glu278 and Trp320.

Belongs to the thiamine-monophosphate kinase family.

It carries out the reaction thiamine phosphate + ATP = thiamine diphosphate + ADP. Its pathway is cofactor biosynthesis; thiamine diphosphate biosynthesis; thiamine diphosphate from thiamine phosphate: step 1/1. Its function is as follows. Catalyzes the ATP-dependent phosphorylation of thiamine-monophosphate (TMP) to form thiamine-pyrophosphate (TPP), the active form of vitamin B1. The chain is Thiamine-monophosphate kinase from Mycobacterium tuberculosis (strain CDC 1551 / Oshkosh).